The primary structure comprises 180 residues: Fucolectin-3 (180 aa).

The N-terminal stretch at 1 to 22 (MEVKMIILLFQILAISTLKSDS) is a signal peptide. Residues 31–179 (QENVALRGRA…VEVNVLFPAP (149 aa)) form an F5/8 type C-like region. Residues Asn58, Asp61, Asn63, and Ser72 each coordinate Ca(2+). 3 disulfide bridges follow: Cys73-Cys168, Cys104-Cys105, and Cys130-Cys146. Residues His75 and Arg101 each coordinate alpha-L-fucose. A Cell attachment site motif is present at residues 101–103 (RGD). Position 108 (Arg108) interacts with alpha-L-fucose. Residues Cys168 and Glu169 each contribute to the Ca(2+) site.

This sequence belongs to the fucolectin family. As to quaternary structure, homotrimer. As to expression, parenchymal hepatocytes.

It is found in the secreted. It localises to the extracellular space. In terms of biological role, acts as a defensive agent. Recognizes blood group fucosylated oligosaccharides including A, B, H and Lewis B-type antigens. Does not recognize Lewis A antigen and has low affinity for monovalent haptens. In Anguilla japonica (Japanese eel), this protein is Fucolectin-3.